The sequence spans 211 residues: Ribosomal RNA large subunit methyltransferase E (211 aa).

5 residues coordinate S-adenosyl-L-methionine: G60, W62, D85, D101, and D126. The active-site Proton acceptor is the K166.

The protein belongs to the class I-like SAM-binding methyltransferase superfamily. RNA methyltransferase RlmE family.

The protein localises to the cytoplasm. The enzyme catalyses uridine(2552) in 23S rRNA + S-adenosyl-L-methionine = 2'-O-methyluridine(2552) in 23S rRNA + S-adenosyl-L-homocysteine + H(+). Functionally, specifically methylates the uridine in position 2552 of 23S rRNA at the 2'-O position of the ribose in the fully assembled 50S ribosomal subunit. The chain is Ribosomal RNA large subunit methyltransferase E from Bordetella petrii (strain ATCC BAA-461 / DSM 12804 / CCUG 43448).